We begin with the raw amino-acid sequence, 333 residues long: Pro-cathepsin H (333 aa).

Residues 1-20 (MWAALPLLCAGAWLLSTGAT) form the signal peptide. A propeptide spans 21 to 95 (AELTVNAIEK…AEIKHKFLWS (75 aa)) (activation peptide). Residues Asn-70 and Asn-99 are each glycosylated (N-linked (GlcNAc...) asparagine). Cystine bridges form between Cys-100/Cys-325, Cys-136/Cys-179, Cys-170/Cys-212, and Cys-270/Cys-320. The propeptide occupies 104–113 (KSNYLRGTGP). Cys-139 is a catalytic residue. Asn-228 carries N-linked (GlcNAc...) asparagine glycosylation. Active-site residues include His-279 and Asn-299.

It belongs to the peptidase C1 family. In terms of assembly, composed of a mini chain and a large chain. The large chain may be split into heavy and light chain. All chains are held together by disulfide bonds. As to expression, widely expressed with highest expression found in non-skeletal tissues. Low levels found in skeletal tissue.

Its subcellular location is the lysosome. It catalyses the reaction Hydrolysis of proteins, acting as an aminopeptidase (notably, cleaving Arg-|-Xaa bonds) as well as an endopeptidase.. Important for the overall degradation of proteins in lysosomes. This Mus musculus (Mouse) protein is Pro-cathepsin H (Ctsh).